The following is a 705-amino-acid chain: MNPLRSIQHNIATPPISGGQPLDAVGPQAQQSHPKRISPSQLSQSAHQALERLSANAEHQRLASLVRNALQDGTFQFQSSNHTQVTYKASICLPADTDTVRTDHLINNELTVQARLNDQSEYDIVSAHLHGSSKAISFDVPSPPPAHGSASSVLSERTHLGMSRVLSQDAVDSSSLETPLLSSPDHSRPPSQPKPVHIGSVRRDSGSLVSDNPVVQALLSFAQADQAFPPQAASIAGVQLEMRPRRDIEKALEEFKGAFTVVKAQLMSGANSSERVDEDVNADIHIPLLLKAIERGAAAFGPNASIGQNSAKAFLASCAPKITSNDDVLSEFINQKLKGDDDLQVRLGAQELLHVATKKEFQLGGLAGSIGVSSILGSAWELGASELLKNAIFGKNFSPSQYALQLAGIDSVPPLIIESMDTMCVLAIIKGMKGEEWSMSDLLPKALKAGAISSVVSFPNNVLQYAGFKSRVGDLAANSVTTEAAIFGAASGIPPEVKESEELMRAGLFQSMKDGVMAHSGEGVDTKKTIERMTRHALDIAPGESTAVKSMGLASIVGMIPLIASNKATGLLSEQVLRIFRSAVFNPIEAIALNALALGGRVNVPGLFDSDNAKHARVVQTILARASQHMEAGDRDISAEELHQMLAPRSEFLRHVGSAIVNGMNASFEAIPALVRKLGYGEAPLAERIPYQDLAVPDTSRQPAP.

Polar residues-rich tracts occupy residues 1–11 and 28–41; these read MNPLRSIQHNI and QAQQ…SPSQ. Disordered stretches follow at residues 1–41 and 173–207; these read MNPL…SPSQ and SSSL…DSGS. Over residues 173 to 184 the composition is skewed to low complexity; that stretch reads SSSLETPLLSSP.

Its subcellular location is the secreted. In terms of biological role, effector protein involved in non-host recognition. The protein is Effector protein hopD1 (hopD1) of Pseudomonas syringae pv. tomato (strain ATCC BAA-871 / DC3000).